The sequence spans 206 residues: Large ribosomal subunit protein uL4 (206 aa).

The interval 43-78 is disordered; it reads ARSGNRKQKDREEVKHTTKKPWRQKGTGRARAGMSS. Residues 49 to 58 are compositionally biased toward basic and acidic residues; it reads KQKDREEVKH. The span at 59 to 70 shows a compositional bias: basic residues; it reads TTKKPWRQKGTG.

The protein belongs to the universal ribosomal protein uL4 family. As to quaternary structure, part of the 50S ribosomal subunit.

In terms of biological role, one of the primary rRNA binding proteins, this protein initially binds near the 5'-end of the 23S rRNA. It is important during the early stages of 50S assembly. It makes multiple contacts with different domains of the 23S rRNA in the assembled 50S subunit and ribosome. Functionally, forms part of the polypeptide exit tunnel. The chain is Large ribosomal subunit protein uL4 from Ralstonia nicotianae (strain ATCC BAA-1114 / GMI1000) (Ralstonia solanacearum).